We begin with the raw amino-acid sequence, 385 residues long: Period circadian protein (385 aa).

Disordered regions lie at residues 28 to 121, 169 to 189, and 322 to 351; these read TAPV…VPPV, GPGPGHGHGIKRGGSHSWEGE, and SPASGTSPNPRPHKHTHVHPSSEQPSTSQG. Positions 71–93 are enriched in low complexity; sequence SGNFTTGSNLHMSSVTNTSNAGT. The segment covering 94-115 has biased composition (gly residues); that stretch reads GTSGTGNSGDGGGGGAGDGPGS. The span at 340–351 shows a compositional bias: polar residues; that stretch reads HPSSEQPSTSQG.

In terms of assembly, forms a heterodimer with timeless (TIM); the complex then translocates into the nucleus. In terms of processing, phosphorylated with a circadian rhythmicity, probably by the double-time protein (dbt). Phosphorylation could be implicated in the stability of per monomer and in the formation of heterodimer per-tim.

The protein resides in the nucleus. The protein localises to the cytoplasm. It is found in the perinuclear region. Essential for biological clock functions. Determines the period length of circadian and ultradian rhythms; an increase in PER dosage leads to shortened circadian rhythms and a decrease leads to lengthened circadian rhythms. Essential for the circadian rhythmicity of locomotor activity, eclosion behavior, and for the rhythmic component of the male courtship song that originates in the thoracic nervous system. The biological cycle depends on the rhythmic formation and nuclear localization of the TIM-PER complex. Light induces the degradation of TIM, which promotes elimination of PER. Nuclear activity of the heterodimer coordinatively regulates PER and TIM transcription through a negative feedback loop. Behaves as a negative element in circadian transcriptional loop. Does not appear to bind DNA, suggesting indirect transcriptional inhibition. This Drosophila nebulosa (Fruit fly) protein is Period circadian protein (per).